The following is a 230-amino-acid chain: Small ribosomal subunit protein uS3 (230 aa).

Positions 43–95 (VNRVIIYSARPKMISEERKAHLAKLLELKFGLEKPVIEVLPIENPNLDAHVIA) constitute a KH type-2 domain.

Belongs to the universal ribosomal protein uS3 family. As to quaternary structure, part of the 30S ribosomal subunit.

Its function is as follows. Binds the lower part of the 30S subunit head. The chain is Small ribosomal subunit protein uS3 from Nanoarchaeum equitans (strain Kin4-M).